A 116-amino-acid polypeptide reads, in one-letter code: MEFGLSWVFLVAILKGVQCEVQLVESGGGLIQPGGSLRLSCAASGFTVSSNYMSWVRQAPGKGLEWVSVIYSCGSTYYADSVKGRFTISRDNSKNTLYLQMNSLRAEDTAVYYCAR.

The signal sequence occupies residues 1-19; that stretch reads MEFGLSWVFLVAILKGVQC. The tract at residues 20 to 44 is framework-1; the sequence is EVQLVESGGGLIQPGGSLRLSCAAS. The region spanning 20–116 is the Ig-like domain; that stretch reads EVQLVESGGG…EDTAVYYCAR (97 aa). Residues cysteine 41 and cysteine 114 are joined by a disulfide bond. The interval 45–52 is complementarity-determining-1; sequence GFTVSSNY. The segment at 53–69 is framework-2; it reads MSWVRQAPGKGLEWVSV. A complementarity-determining-2 region spans residues 70 to 76; the sequence is IYSCGST. Residues 77-114 are framework-3; the sequence is YYADSVKGRFTISRDNSKNTLYLQMNSLRAEDTAVYYC. Residues 115-116 form a complementarity-determining-3 region; it reads AR.

Immunoglobulins are composed of two identical heavy chains and two identical light chains; disulfide-linked.

It is found in the secreted. It localises to the cell membrane. Its function is as follows. V region of the variable domain of immunoglobulin heavy chains that participates in the antigen recognition. Immunoglobulins, also known as antibodies, are membrane-bound or secreted glycoproteins produced by B lymphocytes. In the recognition phase of humoral immunity, the membrane-bound immunoglobulins serve as receptors which, upon binding of a specific antigen, trigger the clonal expansion and differentiation of B lymphocytes into immunoglobulins-secreting plasma cells. Secreted immunoglobulins mediate the effector phase of humoral immunity, which results in the elimination of bound antigens. The antigen binding site is formed by the variable domain of one heavy chain, together with that of its associated light chain. Thus, each immunoglobulin has two antigen binding sites with remarkable affinity for a particular antigen. The variable domains are assembled by a process called V-(D)-J rearrangement and can then be subjected to somatic hypermutations which, after exposure to antigen and selection, allow affinity maturation for a particular antigen. The polypeptide is Immunoglobulin heavy variable 3-66 (Homo sapiens (Human)).